Consider the following 557-residue polypeptide: TGF-beta receptor type-2 (557 aa).

Positions 1–23 are cleaved as a signal peptide; sequence MPPRLRPLLLRVSLWVLVGSSSP. Residues 24–155 lie on the Extracellular side of the membrane; that stretch reads ALLHDRSKEN…KPEEKDEISK (132 aa). Intrachain disulfides connect C41–C74, C44–C61, C51–C57, C67–C91, C111–C126, and C128–C133. 2 N-linked (GlcNAc...) asparagine glycosylation sites follow: N62 and N84. The chain crosses the membrane as a helical span at residues 156-176; that stretch reads VTIISLVPLLVISVAVIVIFY. At 177–557 the chain is on the cytoplasmic side; the sequence is AYRTHKKRKL…PEDGSVTTAK (381 aa). Positions 234-537 constitute a Protein kinase domain; sequence IELDIVVGKG…FSEFKHHDKL (304 aa). ATP contacts are provided by residues 240-248 and K267; that span reads VGKGRFAEV. D369 functions as the Proton acceptor in the catalytic mechanism.

The protein belongs to the protein kinase superfamily. TKL Ser/Thr protein kinase family. TGFB receptor subfamily. As to quaternary structure, heterohexamer; TGFB1, TGFB2 and TGFB3 homodimeric ligands assemble a functional receptor composed of two TGFBR1 and TGFBR2 heterodimers to form a ligand-receptor heterohexamer. Requires Mg(2+) as cofactor. Mn(2+) is required as a cofactor. Phosphorylated on a Ser/Thr residue in the cytoplasmic domain. Detected at low levels in embryonic heart, brain and lung. Detected at high levels in hatchling heart and lung.

It is found in the cell membrane. The protein resides in the membrane raft. It carries out the reaction L-threonyl-[receptor-protein] + ATP = O-phospho-L-threonyl-[receptor-protein] + ADP + H(+). It catalyses the reaction L-seryl-[receptor-protein] + ATP = O-phospho-L-seryl-[receptor-protein] + ADP + H(+). In terms of biological role, transmembrane serine/threonine kinase forming with the TGF-beta type I serine/threonine kinase receptor, TGFBR1, the non-promiscuous receptor for the TGF-beta cytokines TGFB1, TGFB2 and TGFB3. Transduces the TGFB1, TGFB2 and TGFB3 signal from the cell surface to the cytoplasm and is thus regulating a plethora of physiological and pathological processes including cell cycle arrest in epithelial and hematopoietic cells, control of mesenchymal cell proliferation and differentiation, wound healing, extracellular matrix production, immunosuppression and carcinogenesis. The formation of the receptor complex composed of 2 TGFBR1 and 2 TGFBR2 molecules symmetrically bound to the cytokine dimer results in the phosphorylation and the activation of TGFRB1 by the constitutively active TGFBR2. Activated TGFBR1 phosphorylates SMAD2 which dissociates from the receptor and interacts with SMAD4. The SMAD2-SMAD4 complex is subsequently translocated to the nucleus where it modulates the transcription of the TGF-beta-regulated genes. This constitutes the canonical SMAD-dependent TGF-beta signaling cascade. Also involved in non-canonical, SMAD-independent TGF-beta signaling pathways. This is TGF-beta receptor type-2 (TGFBR2) from Gallus gallus (Chicken).